The primary structure comprises 91 residues: Small ribosomal subunit protein uS15 (91 aa).

This sequence belongs to the universal ribosomal protein uS15 family. As to quaternary structure, part of the 30S ribosomal subunit. Forms a bridge to the 50S subunit in the 70S ribosome, contacting the 23S rRNA.

One of the primary rRNA binding proteins, it binds directly to 16S rRNA where it helps nucleate assembly of the platform of the 30S subunit by binding and bridging several RNA helices of the 16S rRNA. Functionally, forms an intersubunit bridge (bridge B4) with the 23S rRNA of the 50S subunit in the ribosome. This is Small ribosomal subunit protein uS15 from Hydrogenobaculum sp. (strain Y04AAS1).